The chain runs to 622 residues: Probable potassium transport system protein Kup (622 aa).

12 helical membrane-spanning segments follow: residues 8–28 (LAVL…TSVL), 50–70 (ILSI…VSLV), 101–121 (VLLL…VITP), 137–157 (PTFT…LFAM), 165–185 (IGKF…LLGV), 213–233 (ITFI…ALYA), 247–267 (WFSV…ALLL), 285–305 (ALIP…QALI), 337–357 (IYMP…VVMF), 366–386 (AYGI…FYVI), 393–413 (PLAL…AFFA), and 419–439 (LFAG…LMIT).

This sequence belongs to the HAK/KUP transporter (TC 2.A.72) family.

It localises to the cell inner membrane. The enzyme catalyses K(+)(in) + H(+)(in) = K(+)(out) + H(+)(out). Its function is as follows. Transport of potassium into the cell. Likely operates as a K(+):H(+) symporter. The sequence is that of Probable potassium transport system protein Kup from Polaromonas naphthalenivorans (strain CJ2).